The following is a 165-amino-acid chain: Chorismate pyruvate-lyase (165 aa).

Substrate is bound by residues Met-35, Arg-77, Leu-115, and Glu-156.

It belongs to the UbiC family. As to quaternary structure, monomer.

Its subcellular location is the cytoplasm. The catalysed reaction is chorismate = 4-hydroxybenzoate + pyruvate. Its pathway is cofactor biosynthesis; ubiquinone biosynthesis. Removes the pyruvyl group from chorismate, with concomitant aromatization of the ring, to provide 4-hydroxybenzoate (4HB) for the ubiquinone pathway. This Escherichia coli O157:H7 protein is Chorismate pyruvate-lyase.